The following is a 316-amino-acid chain: Transaldolase (316 aa).

Lys-132 (schiff-base intermediate with substrate) is an active-site residue.

The protein belongs to the transaldolase family. Type 1 subfamily. Homodimer.

The protein resides in the cytoplasm. The enzyme catalyses D-sedoheptulose 7-phosphate + D-glyceraldehyde 3-phosphate = D-erythrose 4-phosphate + beta-D-fructose 6-phosphate. Its pathway is carbohydrate degradation; pentose phosphate pathway; D-glyceraldehyde 3-phosphate and beta-D-fructose 6-phosphate from D-ribose 5-phosphate and D-xylulose 5-phosphate (non-oxidative stage): step 2/3. Its function is as follows. Transaldolase is important for the balance of metabolites in the pentose-phosphate pathway. The chain is Transaldolase from Vibrio cholerae serotype O1 (strain ATCC 39541 / Classical Ogawa 395 / O395).